The following is a 328-amino-acid chain: MRVLYERDGDVSIIRERVVAVVGYGSQGRAHAMNLRDSGVEVVIGLRPGPSFDAAMSDGFMPRSVQEAVSIADVAMLLTPDECMADVYAKAVRDYLRPGASVAFAHGFNVCYNQIPIGNGVGAFMAAPKAPGHMVRETYIAGWGTPHLVAAKPQCEHLRALAVSYAIANGGGAAGIIETTFVDETETDLFGEQAVLCGGLVELIRAGFDTLVSSGYEPELAYFECMHEMKLIVDVMNRGGVAALNESISNNAEYGEYVSGPRVIGAAVRSAMRRVLNDIRTGRYAKDFIMEGRSNSPTLTACRRAVGEHPIEAVGARLRSRMTCAHGT.

Residues 1–179 (MRVLYERDGD…GGGAAGIIET (179 aa)) form the KARI N-terminal Rossmann domain. NADP(+) contacts are provided by residues 24 to 27 (YGSQ), arginine 47, and serine 51. Histidine 106 is a catalytic residue. Glycine 132 contacts NADP(+). The KARI C-terminal knotted domain occupies 180–325 (TFVDETETDL…ARLRSRMTCA (146 aa)). Aspartate 188, glutamate 192, glutamate 224, and glutamate 228 together coordinate Mg(2+). Residue serine 249 participates in substrate binding.

Belongs to the ketol-acid reductoisomerase family. Mg(2+) is required as a cofactor.

It carries out the reaction (2R)-2,3-dihydroxy-3-methylbutanoate + NADP(+) = (2S)-2-acetolactate + NADPH + H(+). The catalysed reaction is (2R,3R)-2,3-dihydroxy-3-methylpentanoate + NADP(+) = (S)-2-ethyl-2-hydroxy-3-oxobutanoate + NADPH + H(+). It functions in the pathway amino-acid biosynthesis; L-isoleucine biosynthesis; L-isoleucine from 2-oxobutanoate: step 2/4. It participates in amino-acid biosynthesis; L-valine biosynthesis; L-valine from pyruvate: step 2/4. Involved in the biosynthesis of branched-chain amino acids (BCAA). Catalyzes an alkyl-migration followed by a ketol-acid reduction of (S)-2-acetolactate (S2AL) to yield (R)-2,3-dihydroxy-isovalerate. In the isomerase reaction, S2AL is rearranged via a Mg-dependent methyl migration to produce 3-hydroxy-3-methyl-2-ketobutyrate (HMKB). In the reductase reaction, this 2-ketoacid undergoes a metal-dependent reduction by NADPH to yield (R)-2,3-dihydroxy-isovalerate. The sequence is that of Ketol-acid reductoisomerase (NADP(+)) from Tremblaya princeps.